We begin with the raw amino-acid sequence, 506 residues long: Maturase K (506 aa).

It belongs to the intron maturase 2 family. MatK subfamily.

It is found in the plastid. The protein resides in the chloroplast. Usually encoded in the trnK tRNA gene intron. Probably assists in splicing its own and other chloroplast group II introns. This is Maturase K from Crataegus monogyna (Hawthorn).